Here is a 108-residue protein sequence, read N- to C-terminus: UPF0251 protein PF0620 (108 aa).

Belongs to the UPF0251 family.

The protein is UPF0251 protein PF0620 of Pyrococcus furiosus (strain ATCC 43587 / DSM 3638 / JCM 8422 / Vc1).